Here is a 554-residue protein sequence, read N- to C-terminus: Valerianol synthase TPS1F (554 aa).

Residues aspartate 307 and aspartate 311 each coordinate Mg(2+). The DDXXD motif signature appears at 326-330 (VQRWD). The Mg(2+) site is built by aspartate 452, serine 456, and glutamate 460.

It belongs to the terpene synthase family. Mg(2+) serves as cofactor.

The enzyme catalyses (2E,6E)-farnesyl diphosphate + H2O = valerianol + diphosphate. It functions in the pathway secondary metabolite biosynthesis; terpenoid biosynthesis. Functionally, terpene synthase that catalyzes the biosynthesis of the terpene valerianol, which is a volatile compound of floral scent. In Camellia hiemalis (Camellia), this protein is Valerianol synthase TPS1F.